Reading from the N-terminus, the 164-residue chain is R-phycoerythrin alpha chain (164 aa).

(2R,3E)-phycoerythrobilin is bound by residues Asn-47, Lys-81, Cys-82, Arg-84, His-88, Arg-137, Cys-139, and Arg-142.

Belongs to the phycobiliprotein family. As to quaternary structure, heterododecamer of 6 alpha and 6 beta chains. The basic functional unit of phycobiliproteins is a ring-shaped hexamer formed from two back-to-back trimers contacting via the alpha chain subunits. The trimers are composed of alpha/beta subunit heterodimers arranged around a three-fold axis of symmetry. The phycoerythrins also contain a gamma subunit which is located in the center of the hexamer. Contains two covalently linked phycoerythrobilin chromophores.

Its subcellular location is the plastid. It is found in the chloroplast thylakoid membrane. Its function is as follows. Light-harvesting photosynthetic tetrapyrrole chromophore-protein from the phycobiliprotein complex. The chain is R-phycoerythrin alpha chain (rpeA) from Agarophyton chilense (Red seaweed).